The sequence spans 152 residues: MFSGASAINLDAKGRIAMPKRHREPLHAHHNSQLVITVDIQSPCLLLYPVQEWQQIAVKLSQLSDTQPAERAIKRMLLGYAHECELDGNGRILLPTPLRQYANLEKRAMLVGQLNKFELWDEAAWQQQIEESRIAILNEDLAANQRLADFSL.

2 consecutive SpoVT-AbrB domains span residues 5–52 (ASAI…PVQE) and 81–124 (AHEC…DEAA).

The protein belongs to the MraZ family. In terms of assembly, forms oligomers.

It localises to the cytoplasm. The protein localises to the nucleoid. This is Transcriptional regulator MraZ from Shewanella piezotolerans (strain WP3 / JCM 13877).